The following is a 1217-amino-acid chain: ATP-dependent helicase/nuclease subunit A (1217 aa).

Positions 10-475 (VIWTDAQWQS…MDLSQNFRSR (466 aa)) constitute a UvrD-like helicase ATP-binding domain. Position 31-38 (31-38 (AAAGSGKT)) interacts with ATP. Residues 491 to 786 (DEQVGEVNYD…RMMTIHSSKG (296 aa)) enclose the UvrD-like helicase C-terminal domain.

This sequence belongs to the helicase family. AddA subfamily. In terms of assembly, heterodimer of AddA and AddB/RexB. The cofactor is Mg(2+).

The catalysed reaction is Couples ATP hydrolysis with the unwinding of duplex DNA by translocating in the 3'-5' direction.. It catalyses the reaction ATP + H2O = ADP + phosphate + H(+). Its function is as follows. The heterodimer acts as both an ATP-dependent DNA helicase and an ATP-dependent, dual-direction single-stranded exonuclease. Recognizes the chi site generating a DNA molecule suitable for the initiation of homologous recombination. The AddA nuclease domain is required for chi fragment generation; this subunit has the helicase and 3' -&gt; 5' nuclease activities. The sequence is that of ATP-dependent helicase/nuclease subunit A from Staphylococcus aureus (strain bovine RF122 / ET3-1).